Reading from the N-terminus, the 355-residue chain is Aromatic amino acid aminotransferase (355 aa).

An N6-(pyridoxal phosphate)lysine modification is found at K217.

The protein belongs to the class-II pyridoxal-phosphate-dependent aminotransferase family. In terms of assembly, homodimer. The cofactor is pyridoxal 5'-phosphate.

It carries out the reaction an aromatic L-alpha-amino acid + 2-oxoglutarate = an aromatic oxo-acid + L-glutamate. In terms of biological role, aminotransferase that catalyzes the conversion of aromatic amino acids and 2-oxoglutarate into corresponding aromatic oxo acids and L-glutamate. The protein is Aromatic amino acid aminotransferase of Mycobacterium avium (strain 104).